The primary structure comprises 245 residues: MEGEMQRHIKLTKAQTTPVVLVVGDPGRVDKVKVLCDSYVDLAYNREYKSVECTYKGQKFLCVSHGVGSAGCAICFEELMNNGAKVIIRAGSCGSLQPTQMKRGDICICNAAVREDRVSHLMIYSDFPAVADYEVYATLNQVAEELKVPVFNGISLSSDMYYPHKIIPTRLEDYSKANVAVVEMEVATLMVMGTLRKVKTGGIFIVDGCPLKWDEGDFDNNLVPERLENMIKISLETCARLAKKY.

Residue His-8 participates in a purine D-ribonucleoside binding. Residues 24 to 28 (GDPGR), Arg-46, and 89 to 92 (RAGS) contribute to the phosphate site. 184–185 (ME) contributes to the a purine D-ribonucleoside binding site. The active-site Proton donor is the Asp-207.

The protein belongs to the PNP/MTAP phosphorylase family. As to quaternary structure, homohexamer; trimer of homodimers.

It catalyses the reaction inosine + phosphate = alpha-D-ribose 1-phosphate + hypoxanthine. The enzyme catalyses guanosine + phosphate = alpha-D-ribose 1-phosphate + guanine. It carries out the reaction 2'-deoxyguanosine + phosphate = 2-deoxy-alpha-D-ribose 1-phosphate + guanine. The catalysed reaction is 2'-deoxyinosine + phosphate = 2-deoxy-alpha-D-ribose 1-phosphate + hypoxanthine. It functions in the pathway purine metabolism; purine nucleoside salvage. Its function is as follows. As part of the purine salvage pathway, catalyzes the phosphorolytic breakdown of the N-glycosidic bond in the beta-(deoxy)ribonucleoside molecules, with the formation of the corresponding free purine bases and pentose-1-phosphate. Preferentially acts on inosine and guanosine, and to a lesser extent on 2'-deoxyinosine and 2'-deoxyguanosine. The protein is Purine nucleoside phosphorylase of Plasmodium vivax (strain Salvador I).